The primary structure comprises 256 residues: Alcohol dehydrogenase (256 aa).

Position 12–35 (12–35 (FVAGLGGIGLDTSKELVKRDLKNL)) interacts with NAD(+). Residue Ser140 coordinates substrate. The active-site Proton acceptor is the Tyr153.

This sequence belongs to the short-chain dehydrogenases/reductases (SDR) family. In terms of assembly, homodimer.

It catalyses the reaction a primary alcohol + NAD(+) = an aldehyde + NADH + H(+). The enzyme catalyses a secondary alcohol + NAD(+) = a ketone + NADH + H(+). The protein is Alcohol dehydrogenase (Adh) of Drosophila yakuba (Fruit fly).